The following is a 258-amino-acid chain: Ribosomal RNA small subunit methyltransferase J (258 aa).

S-adenosyl-L-methionine is bound by residues 123-124 (ER) and Asp177. The interval 232–258 (IDGPKPSHSLEGKSSRYDIYPKKALKA) is disordered. The span at 239 to 252 (HSLEGKSSRYDIYP) shows a compositional bias: basic and acidic residues.

It belongs to the methyltransferase superfamily. RsmJ family.

Its subcellular location is the cytoplasm. It carries out the reaction guanosine(1516) in 16S rRNA + S-adenosyl-L-methionine = N(2)-methylguanosine(1516) in 16S rRNA + S-adenosyl-L-homocysteine + H(+). Its function is as follows. Specifically methylates the guanosine in position 1516 of 16S rRNA. The protein is Ribosomal RNA small subunit methyltransferase J of Pseudomonas putida (strain W619).